The chain runs to 260 residues: Histidine-binding periplasmic protein (260 aa).

The first 22 residues, 1 to 22, serve as a signal peptide directing secretion; the sequence is MKKLALSLSLVLAFSSATAAFA. Cys60 and Cys67 are oxidised to a cystine. Residues Ser91, Ser92, Ser94, Arg99, Thr143, and Asp183 each contribute to the L-histidine site.

Belongs to the bacterial solute-binding protein 3 family. In terms of assembly, the complex is composed of two ATP-binding proteins (HisP), two transmembrane proteins (HisM and HisQ) and a solute-binding protein (HisJ).

The protein localises to the periplasm. Its function is as follows. Part of the ABC transporter complex HisPMQJ involved in histidine transport. Binds histidine. Interacts with HisQMP and stimulates ATPase activity of HisP, which results in histidine translocation. May have some additional function(s) in translocation that is independent of the stimulation of ATP hydrolysis. The protein is Histidine-binding periplasmic protein of Salmonella typhimurium (strain LT2 / SGSC1412 / ATCC 700720).